The following is a 72-amino-acid chain: Small ribosomal subunit protein bS18 (72 aa).

The protein belongs to the bacterial ribosomal protein bS18 family. As to quaternary structure, part of the 30S ribosomal subunit. Forms a tight heterodimer with protein bS6.

Its function is as follows. Binds as a heterodimer with protein bS6 to the central domain of the 16S rRNA, where it helps stabilize the platform of the 30S subunit. This Francisella tularensis subsp. novicida (strain U112) protein is Small ribosomal subunit protein bS18.